The primary structure comprises 213 residues: Ribosomal RNA small subunit methyltransferase G (213 aa).

Residues glycine 75, phenylalanine 80, 128-129 (IE), and arginine 144 contribute to the S-adenosyl-L-methionine site.

Belongs to the methyltransferase superfamily. RNA methyltransferase RsmG family.

It is found in the cytoplasm. It carries out the reaction guanosine(527) in 16S rRNA + S-adenosyl-L-methionine = N(7)-methylguanosine(527) in 16S rRNA + S-adenosyl-L-homocysteine. Its function is as follows. Specifically methylates the N7 position of guanine in position 527 of 16S rRNA. In Brucella anthropi (strain ATCC 49188 / DSM 6882 / CCUG 24695 / JCM 21032 / LMG 3331 / NBRC 15819 / NCTC 12168 / Alc 37) (Ochrobactrum anthropi), this protein is Ribosomal RNA small subunit methyltransferase G.